The primary structure comprises 143 residues: D-aminoacyl-tRNA deacylase (143 aa).

The Gly-cisPro motif, important for rejection of L-amino acids signature appears at 135–136; sequence GP.

This sequence belongs to the DTD family. In terms of assembly, homodimer.

The protein localises to the cytoplasm. It carries out the reaction glycyl-tRNA(Ala) + H2O = tRNA(Ala) + glycine + H(+). The enzyme catalyses a D-aminoacyl-tRNA + H2O = a tRNA + a D-alpha-amino acid + H(+). Functionally, an aminoacyl-tRNA editing enzyme that deacylates mischarged D-aminoacyl-tRNAs. Also deacylates mischarged glycyl-tRNA(Ala), protecting cells against glycine mischarging by AlaRS. Acts via tRNA-based rather than protein-based catalysis; rejects L-amino acids rather than detecting D-amino acids in the active site. By recycling D-aminoacyl-tRNA to D-amino acids and free tRNA molecules, this enzyme counteracts the toxicity associated with the formation of D-aminoacyl-tRNA entities in vivo and helps enforce protein L-homochirality. The chain is D-aminoacyl-tRNA deacylase from Mycobacterium bovis (strain BCG / Pasteur 1173P2).